Reading from the N-terminus, the 1119-residue chain is Ubiquitin-associated protein 2 (1119 aa).

Residues 1 to 26 (MMTSVSSDHCRGAREKPQISAAQSTQ) are disordered. The span at 8–17 (DHCRGAREKP) shows a compositional bias: basic and acidic residues. Residues 48–92 (KNDSDFEAKVKQLMEVTGKNQDECIVALHDCNGDVNKAINILLEG) enclose the UBA domain. Positions 105-130 (KKKNFAKENSENKENREKKSEKESSR) form a coiled coil. Positions 110–130 (AKENSENKENREKKSEKESSR) are enriched in basic and acidic residues. Disordered regions lie at residues 110 to 202 (AKEN…YSDS), 385 to 476 (LGQF…SPST), 622 to 736 (VHNR…SSHQ), 853 to 905 (RDGS…VNPA), 937 to 966 (SAKQ…YSTG), 982 to 1020 (GGYA…GSVY), and 1082 to 1119 (HLPQ…YWTN). Arg-166 is subject to Omega-N-methylarginine. The span at 168 to 182 (KRARGRGFGRGRGRG) shows a compositional bias: basic residues. Positions 389 to 407 (TTTPSTQQNSTSHPTTTTS) are enriched in low complexity. 4 positions are modified to phosphoserine: Ser-432, Ser-439, Ser-473, and Ser-630. The span at 435–447 (LSQLSQRQQHQSQ) shows a compositional bias: low complexity. The span at 651-662 (SQQTLDTPKTTG) shows a compositional bias: polar residues. Low complexity predominate over residues 663-678 (PPSALPSVSSLPSTTS). Over residues 679-694 (CTALLPSTSQHTGDLT) the composition is skewed to polar residues. Low complexity-rich tracts occupy residues 695–736 (SSPL…SSHQ) and 874–900 (SASP…AQQP). Residues 943-957 (VNLSTPTPPFQQASG) show a composition bias toward polar residues. 2 stretches are compositionally biased toward low complexity: residues 1002 to 1011 (GVSVSSSTTG) and 1088 to 1102 (QSGS…SLQP).

May interact with ANXA2.

It localises to the nucleus. It is found in the chromosome. The protein localises to the cytoplasm. Its function is as follows. Recruits the ubiquitination machinery to RNA polymerase II for polyubiquitination, removal and degradation, when the transcription-coupled nucleotide excision repair (TC-NER) machinery fails to resolve DNA damage. May promote the degradation of ANXA2. The polypeptide is Ubiquitin-associated protein 2 (Homo sapiens (Human)).